Here is a 783-residue protein sequence, read N- to C-terminus: Probable phosphoketolase (783 aa).

It belongs to the XFP family. The cofactor is thiamine diphosphate.

The sequence is that of Probable phosphoketolase from Rhodopseudomonas palustris (strain ATCC BAA-98 / CGA009).